The following is a 30-amino-acid chain: Varv peptide B (30 aa).

The segment at residues 1–30 (GLPVCGETCFGGTCNTPGCSCDPWPMCSRN) is a cross-link (cyclopeptide (Gly-Asn)). 3 disulfide bridges follow: C5–C19, C9–C21, and C14–C27.

This is a cyclic peptide.

In terms of biological role, probably participates in a plant defense mechanism. The sequence is that of Varv peptide B from Viola arvensis (European field pansy).